A 344-amino-acid polypeptide reads, in one-letter code: Protein pelota homolog (344 aa).

This sequence belongs to the eukaryotic release factor 1 family. Pelota subfamily. Monomer. Requires a divalent metal cation as cofactor.

The protein resides in the cytoplasm. Its function is as follows. May function in recognizing stalled ribosomes, interact with stem-loop structures in stalled mRNA molecules, and effect endonucleolytic cleavage of the mRNA. May play a role in the release non-functional ribosomes and degradation of damaged mRNAs. Has endoribonuclease activity. The protein is Protein pelota homolog of Saccharolobus islandicus (strain M.16.27) (Sulfolobus islandicus).